The following is a 400-amino-acid chain: Bifunctional enzyme IspD/IspF (400 aa).

Positions 1–235 are 2-C-methyl-D-erythritol 4-phosphate cytidylyltransferase; it reads MSLWTVLLAA…LAEAAAPPVP (235 aa). The segment at 236-400 is 2-C-methyl-D-erythritol 2,4-cyclodiphosphate synthase; sequence VTGYGYDVHR…VALVSGWRRP (165 aa). A divalent metal cation is bound by residues aspartate 242 and histidine 244. Residues 242–244 and 276–277 each bind 4-CDP-2-C-methyl-D-erythritol 2-phosphate; these read DVH and HS. Position 284 (histidine 284) interacts with a divalent metal cation. Residues 298–300, 303–307, 374–377, and phenylalanine 381 each bind 4-CDP-2-C-methyl-D-erythritol 2-phosphate; these read DIG, FPDSN, and TTEE.

This sequence in the N-terminal section; belongs to the IspD/TarI cytidylyltransferase family. IspD subfamily. In the C-terminal section; belongs to the IspF family. A divalent metal cation is required as a cofactor.

It carries out the reaction 2-C-methyl-D-erythritol 4-phosphate + CTP + H(+) = 4-CDP-2-C-methyl-D-erythritol + diphosphate. The catalysed reaction is 4-CDP-2-C-methyl-D-erythritol 2-phosphate = 2-C-methyl-D-erythritol 2,4-cyclic diphosphate + CMP. Its pathway is isoprenoid biosynthesis; isopentenyl diphosphate biosynthesis via DXP pathway; isopentenyl diphosphate from 1-deoxy-D-xylulose 5-phosphate: step 2/6. It functions in the pathway isoprenoid biosynthesis; isopentenyl diphosphate biosynthesis via DXP pathway; isopentenyl diphosphate from 1-deoxy-D-xylulose 5-phosphate: step 4/6. In terms of biological role, bifunctional enzyme that catalyzes the formation of 4-diphosphocytidyl-2-C-methyl-D-erythritol from CTP and 2-C-methyl-D-erythritol 4-phosphate (MEP) (IspD), and catalyzes the conversion of 4-diphosphocytidyl-2-C-methyl-D-erythritol 2-phosphate (CDP-ME2P) to 2-C-methyl-D-erythritol 2,4-cyclodiphosphate (ME-CPP) with a corresponding release of cytidine 5-monophosphate (CMP) (IspF). In Solidesulfovibrio magneticus (strain ATCC 700980 / DSM 13731 / RS-1) (Desulfovibrio magneticus), this protein is Bifunctional enzyme IspD/IspF.